The primary structure comprises 245 residues: tRNA (guanine-N(1)-)-methyltransferase (245 aa).

Residues Gly114 and 133–138 each bind S-adenosyl-L-methionine; that span reads LGDFVI.

The protein belongs to the RNA methyltransferase TrmD family. Homodimer.

Its subcellular location is the cytoplasm. The enzyme catalyses guanosine(37) in tRNA + S-adenosyl-L-methionine = N(1)-methylguanosine(37) in tRNA + S-adenosyl-L-homocysteine + H(+). Functionally, specifically methylates guanosine-37 in various tRNAs. In Pediococcus pentosaceus (strain ATCC 25745 / CCUG 21536 / LMG 10740 / 183-1w), this protein is tRNA (guanine-N(1)-)-methyltransferase.